Reading from the N-terminus, the 20-residue chain is Short cationic peptide-6a (20 aa).

The residue at position 20 (S20) is a Serine amide.

Expressed by the venom gland.

The protein localises to the secreted. The protein is Short cationic peptide-6a of Cupiennius salei (American wandering spider).